We begin with the raw amino-acid sequence, 342 residues long: Aristolochene synthase prx2 (342 aa).

Mg(2+) is bound by residues aspartate 115, asparagine 244, serine 248, and glutamate 252. 2 residues coordinate (2E,6E)-farnesyl diphosphate: arginine 340 and tyrosine 341.

It belongs to the terpene synthase family. As to quaternary structure, homodimer. Requires Mg(2+) as cofactor.

The catalysed reaction is (2E,6E)-farnesyl diphosphate = (+)-aristolochene + diphosphate. Its pathway is sesquiterpene biosynthesis; aristolochene biosynthesis; aristolochene from farnesyl diphosphate: step 1/1. In terms of biological role, aristolochene synthase; part of the gene cluster that mediates the biosynthesis of PR-toxin, a bicyclic sesquiterpene belonging to the eremophilane class and acting as a mycotoxin. The first step of the pathway is catalyzed by the aristolochene synthase which performs the cyclization of trans,trans-farnesyl diphosphate (FPP) to the bicyclic sesquiterpene aristolochene. Following the formation of aristolochene, the non-oxygenated aristolochene is converted to the trioxygenated intermediate eremofortin B, via 7-epi-neopetasone. This conversion appears to involve three enzymes, a hydroxysterol oxidase-like enzyme, the quinone-oxidase prx3 that forms the quinone-type-structure in the bicyclic nucleus of aristolochene with the C8-oxo group and the C-3 hydroxyl group, and the P450 monooxygenase prx9 that introduces the epoxide at the double bond between carbons 1 and 2. No monoxy or dioxy-intermediates have been reported to be released to the broth, so these three early oxidative reactions may be coupled together. Eremofortin B is further oxidized by another P450 monooxygenase, that introduces a second epoxide between carbons 7 and 11 prior to acetylation to eremofortin A by the acetyltransferase prx11. The second epoxidation may be performed by a second P450 monooxygenase. After the acetylation step, the conversion of eremofortin A to eremofortin C and then to PR-toxin requires only two enzymes. First the conversion of eremofortin A to eremofortin C proceeds by oxidation of the side chain of the molecule at C-12 and is catalyzed by the short-chain oxidoreductase prx1. The cytochrome P450 monooxygenase prx8 also plays a role in this step. The primary alcohol formed at C-12 is finally oxidized by the short-chain alcohol dehydrogenase prx4 that forms PR-toxin. The protein is Aristolochene synthase prx2 of Penicillium rubens (strain ATCC 28089 / DSM 1075 / NRRL 1951 / Wisconsin 54-1255) (Penicillium chrysogenum).